Here is a 638-residue protein sequence, read N- to C-terminus: ATP-dependent rRNA helicase spb4 (638 aa).

The Q motif signature appears at 14–42 (WDAVNPPLSEWVLDAVSSMGFTRMTPVQA). Residues 45 to 249 (IPLFMAHKDV…RVGLRNPVKV (205 aa)) form the Helicase ATP-binding domain. 58–65 (AVTGSGKT) provides a ligand contact to ATP. A DEAD box motif is present at residues 197-200 (DEAD). In terms of domain architecture, Helicase C-terminal spans 283–437 (ALKHILNSVQ…PITVSDAEAA (155 aa)). A coiled-coil region spans residues 521 to 629 (AYKDKQREKR…AKADKDAEEG (109 aa)). The segment at 538–638 (MAESGQQQTT…GGDEEFTGFD (101 aa)) is disordered. Basic and acidic residues predominate over residues 574–597 (MKQVRQERKRWEKMTEEEKKKALE). Over residues 625–638 (DAEEGGDEEFTGFD) the composition is skewed to acidic residues.

This sequence belongs to the DEAD box helicase family. DDX55/SPB4 subfamily. Component of pre-60S ribosomal complexes.

It is found in the nucleus. It localises to the nucleolus. It carries out the reaction ATP + H2O = ADP + phosphate + H(+). ATP-binding RNA helicase involved in the biogenesis of 60S ribosomal subunits. Binds 90S pre-ribosomal particles and dissociates from pre-60S ribosomal particles after processing of 27SB pre-rRNA. Required for the normal formation of 18S rRNA through the processing of pre-rRNAs at sites A0, A1 and A2, and the normal formation of 25S and 5.8S rRNAs through the processing of pre-rRNAs at sites C1 and C2. This is ATP-dependent rRNA helicase spb4 from Emericella nidulans (strain FGSC A4 / ATCC 38163 / CBS 112.46 / NRRL 194 / M139) (Aspergillus nidulans).